Consider the following 226-residue polypeptide: Fibronectin type III domain-containing protein 10 (226 aa).

A signal peptide spans 1–20 (MRAPPLLLLLAACAPPPCAA). Residues 21–182 (AAPTPPGWEP…FTAEPAGMQD (162 aa)) lie on the Extracellular side of the membrane. The Fibronectin type-III domain maps to 74-166 (PAGRSLRASV…PAAAAPETPE (93 aa)). Residues asparagine 86 and asparagine 109 are each glycosylated (N-linked (GlcNAc...) asparagine). A helical membrane pass occupies residues 183–203 (IVVAMTAVGGSICVMLVVICL). Residues 204–226 (LVAYITENLMRPALARPGLRRHP) lie on the Cytoplasmic side of the membrane.

It localises to the membrane. In Homo sapiens (Human), this protein is Fibronectin type III domain-containing protein 10 (FNDC10).